A 303-amino-acid polypeptide reads, in one-letter code: MSSPARSADDGFEAGFPVLIVSGLSGAGKSTVLNVFEDLRYFTVDGLPVRLAPDMVRVLDAQALEQYQGIVLGMDLREAEFVQQFEQALARLQEMGVRPVLLFIEAEQGELMRRYATTRRPHPLESEGMGLELALAEERRRLAPVREAADLVFDTTSFSIHDLRRVIQRRWSSLKGRMRSLRVNIISFGYKYGVPKEADLVFDLRFLPNPYFDTSLRPQSGLDAPVVEYVFGTDSARTFRDRFIDFMTYLLPLYEAEGRYRIAVAIGCTGGRHRSVATAEALLDVLRKSDYAVTIEHRHLELG.

23–30 lines the ATP pocket; it reads GLSGAGKS. 75–78 serves as a coordination point for GTP; the sequence is DLRE.

This sequence belongs to the RapZ-like family.

Its function is as follows. Displays ATPase and GTPase activities. This chain is Nucleotide-binding protein Dvul_1502, found in Nitratidesulfovibrio vulgaris (strain DP4) (Desulfovibrio vulgaris).